The following is a 133-amino-acid chain: MTGGKSGGKASGSKSSQSRSSKAGLAFPVGRVHRLLRKGNYAQRVGAGAPVYLAAVLEYLAAEILELAGNAARDNKKTRIIPRHLQLAIRNDEELNKLLGHVTIAQGGVMPYIHQNLLPKKTPKTGKNPSQEL.

Positions 1 to 10 are enriched in gly residues; sequence MTGGKSGGKA. The disordered stretch occupies residues 1–25; sequence MTGGKSGGKASGSKSSQSRSSKAGL. 2 positions are modified to N6-acetyllysine: K5 and K9. Over residues 11–24 the composition is skewed to low complexity; sequence SGSKSSQSRSSKAG. N5-methylglutamine is present on Q106. S130 bears the Phosphoserine mark. A [ST]-Q motif motif is present at residues 130–131; that stretch reads SQ.

It belongs to the histone H2A family. In terms of assembly, the nucleosome is a histone octamer containing two molecules each of H2A, H2B, H3 and H4 assembled in one H3-H4 heterotetramer and two H2A-H2B heterodimers. The octamer wraps approximately 147 bp of DNA. Post-translationally, phosphorylated to form H2AS128ph (gamma-H2A) in response to DNA double-strand breaks (DSBs) generated by exogenous genotoxic agents and by stalled replication forks. Phosphorylation is dependent on the DNA damage checkpoint kinases MEC1/ATR and TEL1/ATM, spreads on either side of a detected DSB site and may mark the surrounding chromatin for recruitment of proteins required for DNA damage signaling and repair. Gamma-H2A is removed from the DNA prior to the strand invasion-primer extension step of the repair process and subsequently dephosphorylated. Dephosphorylation is necessary for efficient recovery from the DNA damage checkpoint. In terms of processing, acetylated by ESA1 to form H2AK4ac and H2AK7ac.

The protein localises to the nucleus. Its subcellular location is the chromosome. Its function is as follows. Core component of nucleosome which plays a central role in DNA double strand break (DSB) repair. Nucleosomes wrap and compact DNA into chromatin, limiting DNA accessibility to the cellular machineries which require DNA as a template. Histones thereby play a central role in transcription regulation, DNA repair, DNA replication and chromosomal stability. DNA accessibility is regulated via a complex set of post-translational modifications of histones, also called histone code, and nucleosome remodeling. The polypeptide is Histone H2A (HTA1) (Coccidioides immitis (strain RS) (Valley fever fungus)).